The primary structure comprises 489 residues: Long chain base biosynthesis protein 2a (489 aa).

The chain crosses the membrane as a helical span at residues isoleucine 2–phenylalanine 22. Lysine 311 carries the N6-(pyridoxal phosphate)lysine modification.

It belongs to the class-II pyridoxal-phosphate-dependent aminotransferase family. In terms of assembly, heterodimer with LCB1. Component of the serine palmitoyltransferase (SPT) complex, composed of LCB1 and LCB2 (LCB2a or LCB2b). Pyridoxal 5'-phosphate is required as a cofactor. Ubiquitous. Detected in leaves, roots, stems, flowers and at a lower level in mature seeds.

Its subcellular location is the endoplasmic reticulum membrane. The catalysed reaction is L-serine + hexadecanoyl-CoA + H(+) = 3-oxosphinganine + CO2 + CoA. It participates in lipid metabolism; sphingolipid metabolism. Serine palmitoyltransferase (SPT). The heterodimer formed with LCB1 constitutes the catalytic core. Involved in the regulation of the programmed cell death (PCD) signaling pathway. Plays an important role during male gametogenesis and embryogenesis. The protein is Long chain base biosynthesis protein 2a (LCB2a) of Arabidopsis thaliana (Mouse-ear cress).